We begin with the raw amino-acid sequence, 211 residues long: Large ribosomal subunit protein uL4 (211 aa).

The disordered stretch occupies residues 40–80 (QQAHSRQGTASTLTRSEVRGGGRKPYKQKGTGRARQGSIRT). The segment covering 41 to 54 (QAHSRQGTASTLTR) has biased composition (polar residues). The segment covering 60–71 (GGRKPYKQKGTG) has biased composition (basic residues).

This sequence belongs to the universal ribosomal protein uL4 family. In terms of assembly, part of the 50S ribosomal subunit.

One of the primary rRNA binding proteins, this protein initially binds near the 5'-end of the 23S rRNA. It is important during the early stages of 50S assembly. It makes multiple contacts with different domains of the 23S rRNA in the assembled 50S subunit and ribosome. Its function is as follows. Forms part of the polypeptide exit tunnel. This chain is Large ribosomal subunit protein uL4, found in Prochlorococcus marinus (strain MIT 9211).